The primary structure comprises 134 residues: Cytochrome b5 (134 aa).

A2 bears the N-acetylalanine mark. N6-acetyllysine is present on residues K7, K10, and K19. The Cytochrome b5 heme-binding domain occupies 9–85; it reads VKYYTLEEIQ…SKTYIIGELH (77 aa). Heme-binding residues include H44 and H68. Residues 109 to 131 form a helical membrane-spanning segment; sequence WWTNWVIPAISALVVALMYRLYM.

This sequence belongs to the cytochrome b5 family.

It is found in the endoplasmic reticulum membrane. The protein resides in the microsome membrane. Its function is as follows. Cytochrome b5 is a membrane-bound hemoprotein functioning as an electron carrier for several membrane-bound oxygenases. It is also involved in several steps of the sterol biosynthesis pathway, particularly in the C-6 double bond introduction during the C-6 desaturation. The protein is Cytochrome b5 (Cyb5a) of Rattus norvegicus (Rat).